The primary structure comprises 149 residues: IQ domain-containing protein F5 (149 aa).

IQ domains are found at residues 12–41 (ENKAIVSIQAWWRGTLVRRTLLHAALRAWI) and 68–97 (QEWAVVKLQSWVRMWCIRLRYLRLLHAVRI).

This Bos taurus (Bovine) protein is IQ domain-containing protein F5 (IQCF5).